Consider the following 360-residue polypeptide: Peptide chain release factor 1 (360 aa).

Gln-235 carries the post-translational modification N5-methylglutamine. Positions 285–305 are disordered; the sequence is KRQEAEASERRNLLGSGDRSD.

The protein belongs to the prokaryotic/mitochondrial release factor family. Post-translationally, methylated by PrmC. Methylation increases the termination efficiency of RF1.

Its subcellular location is the cytoplasm. Functionally, peptide chain release factor 1 directs the termination of translation in response to the peptide chain termination codons UAG and UAA. In Proteus mirabilis (strain HI4320), this protein is Peptide chain release factor 1.